The sequence spans 531 residues: MSISLGNAFIKNFLGKAPDWYKIAIISFLIINPLVFFFVDPFAAGWLLVVEFIFTLAMALKCYPLQPGGLLAIQAIAIGMTSAEQVKHELVANIEVLLLLVFMVAGIYFMKQLLLFIFTKILIGIKSKTALSVAFCFTAAFLSAFLDALTVIAVVISVAVGFYAIYHRVASGQGGTPSHDHTCDSNVTDELSRDDLENYRAFLRSLLMHAGVGTALGGVMTMVGEPQNLIIADQANWMFGEFIIRMLPVTAPVFICGLLTCVVVEKLGICGYGAKLPENVRNILEEYESEERKNRTNIDNAKLIIQSVIAVWLIVALAMHLAAVGLIGLSVIILATAFTGVIEEHAMGKAFEEALPFTALLAVFFAIVAVIIDQELFKPIIDAVLAVEDKSSQLALFYVANGILSMVSDNVFVGTVYINEVKTALLDGVITRDQFDLLAVAINTGTNLPSVATPNGQAAFLFLLTSALAPLIQLSYGRMVWMALPYTIVLALVGLFGISFLLEPMTTMFYDFGWITHGTIEAATNAVSSGH.

A run of 12 helical transmembrane segments spans residues 13-33 (FLGK…IINP), 34-54 (LVFF…EFIF), 90-110 (LVAN…IYFM), 121-141 (ILIG…TAAF), 145-165 (FLDA…FYAI), 206-226 (LLMH…VGEP), 242-262 (FIIR…LTCV), 308-328 (VIAV…GLIG), 352-372 (EEAL…AVII), 394-414 (LALF…VFVG), 456-476 (GQAA…QLSY), and 482-502 (MALP…SFLL).

The protein belongs to the NhaB Na(+)/H(+) (TC 2.A.34) antiporter family.

Its subcellular location is the cell inner membrane. The catalysed reaction is 2 Na(+)(in) + 3 H(+)(out) = 2 Na(+)(out) + 3 H(+)(in). Na(+)/H(+) antiporter that extrudes sodium in exchange for external protons. This is Na(+)/H(+) antiporter NhaB from Aliivibrio salmonicida (strain LFI1238) (Vibrio salmonicida (strain LFI1238)).